The chain runs to 604 residues: Elongation factor 4 (604 aa).

The region spanning 7–189 is the tr-type G domain; the sequence is KNIRNFCIIA…QIVTKIPAPS (183 aa). Residues 19–24 and 136–139 contribute to the GTP site; these read DHGKST and NKID.

Belongs to the TRAFAC class translation factor GTPase superfamily. Classic translation factor GTPase family. LepA subfamily.

Its subcellular location is the cell membrane. The enzyme catalyses GTP + H2O = GDP + phosphate + H(+). In terms of biological role, required for accurate and efficient protein synthesis under certain stress conditions. May act as a fidelity factor of the translation reaction, by catalyzing a one-codon backward translocation of tRNAs on improperly translocated ribosomes. Back-translocation proceeds from a post-translocation (POST) complex to a pre-translocation (PRE) complex, thus giving elongation factor G a second chance to translocate the tRNAs correctly. Binds to ribosomes in a GTP-dependent manner. The polypeptide is Elongation factor 4 (Lachnospira eligens (strain ATCC 27750 / DSM 3376 / VPI C15-48 / C15-B4) (Eubacterium eligens)).